The following is a 164-amino-acid chain: Phosphopantetheine adenylyltransferase (164 aa).

Residue threonine 14 participates in substrate binding. Residues threonine 14 to phenylalanine 15 and histidine 22 contribute to the ATP site. The substrate site is built by lysine 46, leucine 78, and arginine 92. Residues glycine 93–arginine 95, glutamate 103, and histidine 128–threonine 134 contribute to the ATP site.

The protein belongs to the bacterial CoaD family. As to quaternary structure, homohexamer. It depends on Mg(2+) as a cofactor.

The protein resides in the cytoplasm. The enzyme catalyses (R)-4'-phosphopantetheine + ATP + H(+) = 3'-dephospho-CoA + diphosphate. It functions in the pathway cofactor biosynthesis; coenzyme A biosynthesis; CoA from (R)-pantothenate: step 4/5. Reversibly transfers an adenylyl group from ATP to 4'-phosphopantetheine, yielding dephospho-CoA (dPCoA) and pyrophosphate. The sequence is that of Phosphopantetheine adenylyltransferase from Vibrio cholerae serotype O1 (strain ATCC 39541 / Classical Ogawa 395 / O395).